The chain runs to 359 residues: Endoglucanase (359 aa).

Residues 1–23 (MPLRALVAVIVTTAVMLVPRAWA) form the signal peptide. Glu-53 functions as the Proton donor in the catalytic mechanism. The active-site Nucleophile is Asp-110.

It belongs to the glycosyl hydrolase 8 (cellulase D) family.

It carries out the reaction Endohydrolysis of (1-&gt;4)-beta-D-glucosidic linkages in cellulose, lichenin and cereal beta-D-glucans.. Its function is as follows. The biological conversion of cellulose to glucose generally requires three types of hydrolytic enzymes: (1) Endoglucanases which cut internal beta-1,4-glucosidic bonds; (2) Exocellobiohydrolases that cut the disaccharide cellobiose from the non-reducing end of the cellulose polymer chain; (3) Beta-1,4-glucosidases which hydrolyze the cellobiose and other short cello-oligosaccharides to glucose. This Cellulomonas uda protein is Endoglucanase.